The sequence spans 381 residues: 5-cytosine rRNA methyltransferase NSUN4 (381 aa).

Residues 1–25 (MAAPVLRCVRKLLKLVDFTPVPRRY) constitute a mitochondrion transit peptide. Positions 182, 183, 184, and 201 each coordinate S-adenosyl-L-methionine. Position 203 is a phosphoserine (Ser203). Residues Arg206, Asp234, Gly235, and Asp252 each coordinate S-adenosyl-L-methionine. The active-site Nucleophile is Cys307.

Belongs to the class I-like SAM-binding methyltransferase superfamily. RsmB/NOP family. As to quaternary structure, heterodimer with MTERFD2/MTERF4; this interaction seems to be required for NSUN4 recruitment to the mitochondrial large ribosomal subunit.

The protein resides in the mitochondrion. The enzyme catalyses a cytidine in rRNA + S-adenosyl-L-methionine = a 5-methylcytidine in rRNA + S-adenosyl-L-homocysteine + H(+). It catalyses the reaction a cytidine in mRNA + S-adenosyl-L-methionine = a 5-methylcytidine in mRNA + S-adenosyl-L-homocysteine + H(+). Functionally, mitochondrial RNA cytosine C(5)-methyltransferase that methylates cytosine to 5-methylcytosine (m5C) in various RNAs, such as rRNAs, mRNAs and some long non-coding RNAs (lncRNAs). Involved in mitochondrial ribosome small subunit (SSU) maturation by catalyzing methylation of mitochondrial 12S rRNA; the function is independent of MTERFD2/MTERF4 and assembled mitochondrial ribosome large subunit (LSU). Targeted to LSU by MTERFD2/MTERF4 and probably is involved in a final step in ribosome biogenesis to ensure that SSU and LSU are assembled. In vitro can methylate 16S rRNA of the LSU; the methylation is enhanced by MTERFD/MTERF4. Also acts as a regulator of innate immunity by marking double-stranded mitochondrial RNAs(mt-dsRNAs) generated in response to stress: catalyzes m5C modification on mitochondrial RNAs, such as a mRNAs and lncRNAs, with a preference for the termini of light-strand lncRNAs, promoting their degradation and cytosolic release. Modified light-strand lncRNAs are then recognized by C1QBP reader and recruited to the mitochondrial degradosome complex, which promotes their degradation. This is 5-cytosine rRNA methyltransferase NSUN4 from Mus musculus (Mouse).